The sequence spans 220 residues: Ribonuclease HII (220 aa).

An RNase H type-2 domain is found at 27–220 (CIIVGVDEVG…SKISYMFKNS (194 aa)). 3 residues coordinate a divalent metal cation: D33, E34, and D128.

It belongs to the RNase HII family. Mn(2+) is required as a cofactor. The cofactor is Mg(2+).

The protein resides in the cytoplasm. The enzyme catalyses Endonucleolytic cleavage to 5'-phosphomonoester.. Its function is as follows. Endonuclease that specifically degrades the RNA of RNA-DNA hybrids. In Ehrlichia ruminantium (strain Gardel), this protein is Ribonuclease HII.